The chain runs to 139 residues: Thyrotropin subunit beta (139 aa).

The N-terminal stretch at 1 to 20 (MELSVAMCGLLCLLFSQAVP) is a signal peptide. Cystine bridges form between Cys-22–Cys-72, Cys-36–Cys-87, Cys-39–Cys-127, Cys-47–Cys-103, Cys-51–Cys-105, and Cys-108–Cys-115. The N-linked (GlcNAc...) asparagine glycan is linked to Asn-43.

The protein belongs to the glycoprotein hormones subunit beta family. In terms of assembly, heterodimer of a common alpha chain and a unique beta chain which confers biological specificity to thyrotropin, lutropin, follitropin and gonadotropin.

The protein resides in the secreted. Indispensable for the control of thyroid structure and metabolism. May play some role in the biological processes of the immature fishes. This Salmo salar (Atlantic salmon) protein is Thyrotropin subunit beta (tshb).